We begin with the raw amino-acid sequence, 262 residues long: Ribosomal RNA small subunit methyltransferase A (262 aa).

H16, L18, G43, E64, D89, and N109 together coordinate S-adenosyl-L-methionine.

The protein belongs to the class I-like SAM-binding methyltransferase superfamily. rRNA adenine N(6)-methyltransferase family. RsmA subfamily.

The protein localises to the cytoplasm. The enzyme catalyses adenosine(1518)/adenosine(1519) in 16S rRNA + 4 S-adenosyl-L-methionine = N(6)-dimethyladenosine(1518)/N(6)-dimethyladenosine(1519) in 16S rRNA + 4 S-adenosyl-L-homocysteine + 4 H(+). Functionally, specifically dimethylates two adjacent adenosines (A1518 and A1519) in the loop of a conserved hairpin near the 3'-end of 16S rRNA in the 30S particle. May play a critical role in biogenesis of 30S subunits. The polypeptide is Ribosomal RNA small subunit methyltransferase A (Xanthomonas oryzae pv. oryzae (strain MAFF 311018)).